Consider the following 356-residue polypeptide: MQTLHALLRDIPAPDAEAMARAQQHIDGLLKPPGSLGRLETLAVQLAGMPGLNGTPQVDEKAVLVMCADHGVWDEGVAVSPKIVTAIQAANMTRGTTGVCVLAAQAGAKVHVIDVGIDAEPIPGVVNMRVARGCGNIAVGPAMSRLQAEALLLEVSRYTCDLAQRGVTLFGVGELGMANTTPAAAMVSVFTGSDAKEVVGIGANLPPSRIDNKVDVVRRAIAINQPNPRDGIDVLSKVGGFDLVGMTGVMLGAARCGLPVLLDGFLSYSAALAACQIAPAVRLYLIPSHFSAEKGARIALAHLSMDPYLHMAMRLGEGSGAALAMPIVEAACAMFHNMGELAASNIVLPEGNANAT.

The active-site Proton acceptor is E317.

The protein belongs to the CobT family. Homodimer.

The catalysed reaction is 5,6-dimethylbenzimidazole + nicotinate beta-D-ribonucleotide = alpha-ribazole 5'-phosphate + nicotinate + H(+). It participates in nucleoside biosynthesis; alpha-ribazole biosynthesis; alpha-ribazole from 5,6-dimethylbenzimidazole: step 1/2. Functionally, catalyzes the synthesis of alpha-ribazole-5'-phosphate from nicotinate mononucleotide (NAMN) and 5,6-dimethylbenzimidazole (DMB). The sequence is that of Nicotinate-nucleotide--dimethylbenzimidazole phosphoribosyltransferase from Salmonella gallinarum (strain 287/91 / NCTC 13346).